The following is a 333-amino-acid chain: Gap junction alpha-4 protein (333 aa).

At 1-20 the chain is on the cytoplasmic side; the sequence is MGDWGFLEKLLDQVQEHSTV. A helical membrane pass occupies residues 21–40; that stretch reads VGKIWLTVLFIFRILILGLA. Residues 41-76 are Extracellular-facing; it reads GESVWGDEQSDFECNTAQPGCTNVCYDQAFPISHIR. A helical transmembrane segment spans residues 77 to 99; sequence YWVLQFLFVSTPTLIYLGHVIYL. Residues 100-148 lie on the Cytoplasmic side of the membrane; the sequence is SRREERLRQKEGELRALPSKDPHVERALAAIEHQMAKISVAEDGRLRIR. A helical transmembrane segment spans residues 149–171; it reads GALMGTYVISVLCKSVLEAGFLY. Residues 172 to 208 lie on the Extracellular side of the membrane; that stretch reads GQWRLYGWTMEPVFVCQRAPCPHVVDCYVSRPTEKTI. The chain crosses the membrane as a helical span at residues 209–231; sequence FIIFMLVVGVISLVLNLLELVHL. At 232–333 the chain is on the cytoplasmic side; the sequence is LCRCVSREIK…NSSASKKQYV (102 aa). Positions 292–333 are disordered; it reads ANLTTEERLTSTRPPPFVNAAPQGGQKSSSRPNSSASKKQYV. The segment covering 318-333 has biased composition (low complexity); the sequence is KSSSRPNSSASKKQYV.

It belongs to the connexin family. Alpha-type (group II) subfamily. As to quaternary structure, a connexon is composed of a hexamer of connexins. Highly expressed in lung.

It localises to the cell membrane. Its subcellular location is the cell junction. The protein resides in the gap junction. One gap junction consists of a cluster of closely packed pairs of transmembrane channels, the connexons, through which materials of low MW diffuse from one cell to a neighboring cell. In Rattus norvegicus (Rat), this protein is Gap junction alpha-4 protein (Gja4).